The primary structure comprises 191 residues: Calcium and integrin-binding protein 1 (191 aa).

Glycine 2 carries the N-myristoyl glycine lipid modification. 2 EF-hand domains span residues 103–138 (TPDI…LTGE) and 148–183 (EMKQ…SPDF). Aspartate 116, aspartate 118, aspartate 120, threonine 122, aspartate 127, aspartate 161, aspartate 163, aspartate 165, threonine 167, and glutamate 172 together coordinate Ca(2+).

As to quaternary structure, monomer. Interacts with the heterodimeric integrin alpha-IIb/beta3 (ITGA2B-ITGB3). Interacts with ITGA2B (via cytoplasmic domain); the interaction is direct and calcium-dependent. Interacts with the protein kinases PLK2/SNK and PRKDC (via the region immediately upstream of the kinase domain). Interacts with PLK3; the interaction inhibits PLK3 kinase activity. Interacts with PSEN2. Interacts (via C-terminus) with F8. Interacts with NBR1 (via C-terminus). Interacts with FEZ1 (via C-terminus). Interacts with UBR5 (via C-terminus); the interaction is sensitive to DNA damage, and may target CIB1 for ubiquitin-mediated degradation. Interacts with IFI6; the interaction is direct. Interacts with BCL2. Interacts with TAS1R2 (via C-terminus); the interaction is independent of the myristoylation state of CIB1. Interacts with ITPR3; the interaction occurs in a calcium dependent manner. Interacts with PTK2/FAK1. Interacts with MAP3K5; the interaction inhibits MAP3K5 activation by phosphorylation, and its subsequent interaction with TRAF2. Interacts (via C-terminal region) with STMN2 (via the N-terminal region); the interaction is direct, occurs in a calcium-dependent manner and attenuates the STMN2-induced neurite outgrowth inhibition. Interacts with SPHK1, the interaction occurs in a calcium-dependent manner. Interacts with ITGA2B (via C-terminal cytoplasmic tail); the interaction occurs upon platelet aggregation and is stabilized/increased in a calcium and magnesium-dependent manner. Interacts with PAK1 (via N-terminal region); the interaction is direct and occurs in a calcium-dependent manner. Interacts with RAC3 (via C-terminal region); the interaction induces their association with the cytoskeleton upon alpha-IIb/beta3 integrin-mediated adhesion. Interacts with ITGA5 and ITGAV. Interacts with MYO1C. Interacts with ITGA2B (via C-terminal cytoplasmic tail region). Interacts (via C-terminal region) with PPP3R1 isoform 1 and isoform 2; the interactions increase upon cardiomyocytes hypertrophy. Interacts with CACNA1C; the interaction increases upon cardiomyocytes hypertrophy. Interacts and forms a complex with TMC6 and TMC8; the interaction stabilizes each component of the complex. Expressed strongly in Sertoli cells, weakly in pachytene spermatocytes, round spermatids and condensing spermatids (at protein level). Expressed in testis. Expressed in cardiac myocytes and endothelial cells. Expressed in heart, liver, spleen, lung, kidney, brain and inner ear. In the inner ear, expressed in the vestibule, basilar membrane and spiral ganglion cells.

Its subcellular location is the membrane. The protein resides in the cell membrane. The protein localises to the sarcolemma. It is found in the apical cell membrane. It localises to the cell projection. Its subcellular location is the ruffle membrane. The protein resides in the filopodium tip. The protein localises to the growth cone. It is found in the lamellipodium. It localises to the cytoplasm. Its subcellular location is the cytoskeleton. The protein resides in the microtubule organizing center. The protein localises to the centrosome. It is found in the perinuclear region. It localises to the nucleus. Its subcellular location is the neuron projection. The protein resides in the perikaryon. Functionally, calcium-binding protein that plays a role in the regulation of numerous cellular processes, such as cell differentiation, cell division, cell proliferation, cell migration, thrombosis, angiogenesis, cardiac hypertrophy and apoptosis. Involved in bone marrow megakaryocyte differentiation by negatively regulating thrombopoietin-mediated signaling pathway. Participates in the endomitotic cell cycle of megakaryocyte, a form of mitosis in which both karyokinesis and cytokinesis are interrupted. Plays a role in integrin signaling by negatively regulating alpha-IIb/beta3 activation in thrombin-stimulated megakaryocytes preventing platelet aggregation. Up-regulates PTK2/FAK1 activity, and is also needed for the recruitment of PTK2/FAK1 to focal adhesions; it thus appears to play an important role in focal adhesion formation. Positively regulates cell migration on fibronectin in a CDC42-dependent manner, the effect being negatively regulated by PAK1. Functions as a negative regulator of stress activated MAP kinase (MAPK) signaling pathways. Down-regulates inositol 1,4,5-trisphosphate receptor-dependent calcium signaling. Involved in sphingosine kinase SPHK1 translocation to the plasma membrane in a N-myristoylation-dependent manner preventing TNF-alpha-induced apoptosis. Regulates serine/threonine-protein kinase PLK3 activity for proper completion of cell division progression. Plays a role in microtubule (MT) dynamics during neuronal development; disrupts the MT depolymerization activity of STMN2 attenuating NGF-induced neurite outgrowth and the MT reorganization at the edge of lamellipodia. Promotes cardiomyocyte hypertrophy via activation of the calcineurin/NFAT signaling pathway. Stimulates calcineurin PPP3R1 activity by mediating its anchoring to the sarcolemma. In ischemia-induced (pathological or adaptive) angiogenesis, stimulates endothelial cell proliferation, migration and microvessel formation by activating the PAK1 and ERK1/ERK2 signaling pathway. Also promotes cancer cell survival and proliferation. May regulate cell cycle and differentiation of spermatogenic germ cells, and/or differentiation of supporting Sertoli cells. Forms a complex with TMC6/EVER1 and TMC8/EVER2 in lymphocytes and keratynocytes where CIB1 stabilizes TMC6 and TMC8 levels and reciprocally. The polypeptide is Calcium and integrin-binding protein 1 (Cib1) (Mus musculus (Mouse)).